The sequence spans 755 residues: Polycomb protein SUZ12 (755 aa).

Disordered regions lie at residues 26-79 (KMGN…RRIS), 333-377 (NANG…SRRA), and 392-420 (AVGRETRNNSNKRRRGGAYGEDHPPSDDR). Residues 30–42 (KASSQAQKRSQSQ) are compositionally biased toward low complexity. Composition is skewed to polar residues over residues 43-57 (TGDSATSRPATDGSG) and 349-359 (TQPNGTHNEGT). The span at 411-420 (GEDHPPSDDR) shows a compositional bias: basic and acidic residues. Residues 436-458 (FACLICGAENERLSQLRAHYMCH) form a C2H2-type zinc finger. Residues 580-645 (IDDSWLLLKH…KADWLVSKRS (66 aa)) are polycomb protein VEFS-Box.

Belongs to the VEFS (VRN2-EMF2-FIS2-SU(Z)12) family. Component of the polycomb repressive complex 2 (PRC2) that consists of four core subunits icluding EZH2, EED, SUZ12, and RBBP4, among which EZH2 is the catalytic subunit and which minimally requires EED and SUZ12 for catalysis.

It is found in the nucleus. Component of the of the Polycomb Repressive Complex 2 (PRC2), a histone H3 lysine methyltransferase responsible for generating mono-, di-, and tri-methylation on Lys27 (H3K27me1, H3K27me2 and H3K27me3). The tri-methylated form is known to be critical in gene repression, and its proper placement is essential in defining repression patterns during development. SUZ12 is not a catalytic subunit but is required for the complex regulation of histone H3 lysine methylation by EZH2. This is Polycomb protein SUZ12 from Chaetomium thermophilum (strain DSM 1495 / CBS 144.50 / IMI 039719) (Thermochaetoides thermophila).